The chain runs to 217 residues: Small ribosomal subunit protein uS3c (217 aa).

In terms of domain architecture, KH type-2 spans 43–117; it reads IKNYVQKNKR…KLNIAITRIA (75 aa).

The protein belongs to the universal ribosomal protein uS3 family. As to quaternary structure, part of the 30S ribosomal subunit.

It is found in the plastid. Its subcellular location is the chloroplast. The polypeptide is Small ribosomal subunit protein uS3c (rps3) (Platanus occidentalis (Sycamore)).